Here is a 141-residue protein sequence, read N- to C-terminus: Hemoglobin subunit alpha (141 aa).

Residues 1 to 141 enclose the Globin domain; that stretch reads VLSANDKTNV…VSTVLTSKYR (141 aa). Serine 3 is modified (phosphoserine). Lysine 7 carries the N6-succinyllysine modification. Phosphothreonine is present on threonine 8. An N6-succinyllysine modification is found at lysine 11. An N6-acetyllysine; alternate modification is found at lysine 16. Lysine 16 bears the N6-succinyllysine; alternate mark. Tyrosine 24 carries the post-translational modification Phosphotyrosine. Serine 35 is modified (phosphoserine). Lysine 40 is modified (N6-succinyllysine). Position 49 is a phosphoserine (serine 49). Glutamine 58 is a binding site for O2. Histidine 87 contributes to the heme b binding site. Position 108 is a phosphothreonine (threonine 108). Residues serine 124 and serine 131 each carry the phosphoserine modification. Residues threonine 134 and threonine 137 each carry the phosphothreonine modification. Serine 138 bears the Phosphoserine mark.

This sequence belongs to the globin family. As to quaternary structure, heterotetramer of two alpha chains and two beta chains. Red blood cells.

In terms of biological role, involved in oxygen transport from the lung to the various peripheral tissues. Its function is as follows. Hemopressin acts as an antagonist peptide of the cannabinoid receptor CNR1. Hemopressin-binding efficiently blocks cannabinoid receptor CNR1 and subsequent signaling. The polypeptide is Hemoglobin subunit alpha (HBA) (Didelphis virginiana (North American opossum)).